The primary structure comprises 76 residues: cAMP-dependent protein kinase inhibitor alpha (76 aa).

Thr2 bears the N-acetylthreonine mark. The segment at 49–76 (KTEGEEDAQRSSTEQSGEAQGEAAKSES) is disordered.

This sequence belongs to the PKI family.

Its function is as follows. Extremely potent competitive inhibitor of cAMP-dependent protein kinase activity, this protein interacts with the catalytic subunit of the enzyme after the cAMP-induced dissociation of its regulatory chains. The chain is cAMP-dependent protein kinase inhibitor alpha (PKIA) from Homo sapiens (Human).